The primary structure comprises 154 residues: Ribosome maturation factor RimP (154 aa).

It belongs to the RimP family.

Its subcellular location is the cytoplasm. Its function is as follows. Required for maturation of 30S ribosomal subunits. The protein is Ribosome maturation factor RimP of Salmonella gallinarum (strain 287/91 / NCTC 13346).